The following is a 93-amino-acid chain: MDDKKDNRHLSKPAYREECTGDTERSTTAYMDILEDVSTGSTSKLPLEAKFVKISNNISEKENLPKEKEIGGVKGLEPTRYGDWQHKGKVTDF.

Residues 1–24 are disordered; it reads MDDKKDNRHLSKPAYREECTGDTE. Residues 8 to 55 form the RPE1 insert domain; that stretch reads RHLSKPAYREECTGDTERSTTAYMDILEDVSTGSTSKLPLEAKFVKIS.

The protein belongs to the SDHAF4 family.

In Rickettsia conorii (strain ATCC VR-613 / Malish 7), this protein is UPF0369 protein RC0209.